Consider the following 164-residue polypeptide: Large ribosomal subunit protein bL9 (164 aa).

The protein belongs to the bacterial ribosomal protein bL9 family.

Functionally, binds to the 23S rRNA. The polypeptide is Large ribosomal subunit protein bL9 (Borrelia recurrentis (strain A1)).